Consider the following 443-residue polypeptide: Pyrrolysine--tRNA ligase (443 aa).

Positions 103–177 (VRKAMPKSVA…PAAPVPTSAP (75 aa)) are disordered. The segment covering 131-177 (PAPATPVSAPAQAPAPSTGSASATSASAQRMANSAAAPAAPVPTSAP) has biased composition (low complexity).

Belongs to the class-II aminoacyl-tRNA synthetase family.

The protein resides in the cytoplasm. It carries out the reaction tRNA(Pyl) + L-pyrrolysine + ATP = L-pyrrolysyl-tRNA(Pyl) + AMP + diphosphate. In terms of biological role, catalyzes the attachment of pyrrolysine to tRNA(Pyl). Pyrrolysine is a lysine derivative encoded by the termination codon UAG. The protein is Pyrrolysine--tRNA ligase of Methanosarcina acetivorans (strain ATCC 35395 / DSM 2834 / JCM 12185 / C2A).